The chain runs to 1356 residues: Partitioning defective 3 homolog (1356 aa).

The residue at position 25 (Ser25) is a Phosphoserine. 2 disordered regions span residues 81–100 and 154–262; these read EQDP…GTQS and SVSD…GLEH. Thr91 bears the Phosphothreonine mark. Positions 91-100 are enriched in low complexity; it reads TSASSTGTQS. 2 stretches are compositionally biased toward polar residues: residues 154–163 and 171–187; these read SVSDSNFSSE and TRWS…TAGS. 2 positions are modified to phosphoserine: Ser156 and Ser174. The span at 190–203 shows a compositional bias: basic and acidic residues; it reads TCDRKKDENYRSLP. A compositionally biased stretch (polar residues) spans 204–224; sequence RDTSNWSNQFQRDNARSSLSA. Residues 246 to 260 show a composition bias toward basic and acidic residues; it reads DNSRVEPVGHADTGL. Residues 271–359 form the PDZ 1 domain; it reads MVKLVEVPND…TPIIWFHVVP (89 aa). Residue Ser383 is modified to Phosphoserine. Residues 408–448 form a disordered region; the sequence is LNHPPEQIDSHSRLPHSAHPSGKPPSAPASAPQNVFSTTVS. PDZ domains lie at 461–546 and 590–677; these read NIQL…LVFR and EVPL…GMIQ. Tyr489 is subject to Phosphotyrosine. Ser692, Ser695, Ser715, Ser728, Ala792, Ser809, and Ser827 each carry phosphoserine. The tract at residues 712–936 is interaction with PRKCI and PRKCZ; it reads RRISHSLYSG…AAIDKSYDKP (225 aa). Lys834 is subject to N6-acetyllysine. Residue Ser837 is modified to Phosphoserine. Position 851 is an N6-acetyllysine (Lys851). Phosphoserine is present on residues Ser852 and Ser873. Disordered regions lie at residues 865–886 and 932–1025; these read TVDD…GLKK and SYDK…DMFR. Lys885 bears the N6-acetyllysine mark. The segment at 935 to 1356 is interaction with FRMD4A; it reads KPAVDDDDEG…TPEKGRPFYS (422 aa). Over residues 939–953 the composition is skewed to acidic residues; it reads DDDDEGMETLEEDTE. A Phosphoserine; by AURKA modification is found at Ser962. The segment covering 968 to 982 has biased composition (polar residues); that stretch reads DQPSHSLERQMNGNQ. Ser971 and Ser973 each carry phosphoserine. Residues 983 to 1009 show a composition bias toward basic and acidic residues; that stretch reads EKGDKTDRKKDKTGKEKKKDRDKEKDK. Ser1046 is subject to Phosphoserine. Residues 1049 to 1077 are a coiled coil; it reads SEEERIRMKQEQERIQAKTREFRERQARE. The tract at residues 1129 to 1356 is disordered; that stretch reads QVKKPRNSKP…TPEKGRPFYS (228 aa). The span at 1136–1149 shows a compositional bias: polar residues; that stretch reads SKPSPVDSNRSTPS. A compositionally biased stretch (basic and acidic residues) spans 1150 to 1177; the sequence is NHDRIQRLRQEFQQAKQDEDVEDRRRTY. Coiled-coil stretches lie at residues 1151–1174, 1201–1224, and 1280–1301; these read HDRI…EDRR, VQMQ…YSSL, and MLET…MKKQ. Residues 1196 to 1205 show a composition bias toward low complexity; it reads SVSVEVQMQR. A compositionally biased stretch (polar residues) spans 1221-1245; sequence YSSLPRQSRKNASSVSQDSWEQNYS. Residues 1285-1298 are compositionally biased toward basic and acidic residues; it reads ELLRQEQRRKEQQM. The segment covering 1337-1346 has biased composition (polar residues); that stretch reads SQVARLNRLQ. Positions 1347–1356 are enriched in basic and acidic residues; the sequence is TPEKGRPFYS. Lys1350 carries the N6-acetyllysine modification.

This sequence belongs to the PAR3 family. As to quaternary structure, interacts (via PDZ 1 domain) with F11R/JAM1, PARD6A and PARD6B. Interacts with PRCKI and CDH5. Interacts (via PDZ 3 domain) with PTEN (via C-terminus). Part of a complex with PARD6A or PARD6B, PRKCI or PRKCZ and CDC42 or RAC1. Component of a complex whose core is composed of ARHGAP17, AMOT, PALS1, PATJ and PARD3/PAR3. Interacts with LIMK2, AURKA and AURKB. Component of the Par polarity complex, composed of at least phosphorylated PRKCZ, PARD3 and TIAM1. Directly interacts with TIAM1 and TIAM2. Interacts with ECT2, FBF1 and SIRT2. Interacts (via coiled-coil domain) with FRMD4A. Found in a complex with PARD3, CYTH1 and FRMD4A. Interacts with SAPCD2. Interacts with PRKCA. In terms of assembly, interacts with PRKCZ. In terms of processing, acetylated. Deacetylated by SIRT2, thereby inhibiting Schwann cell peripheral myelination. Phosphorylation at Ser-827 by PRKCZ and PRKCI occurs at the most apical tip of epithelial cell-cell contacts during the initial phase of tight junction formation and may promote dissociation of the complex with PARD6. EGF-induced Tyr-1127 phosphorylation mediates dissociation from LIMK2. Phosphorylation by AURKA at Ser-962 is required for the normal establishment of neuronal polarity. Widely expressed.

It localises to the cytoplasm. Its subcellular location is the endomembrane system. It is found in the cell junction. The protein resides in the tight junction. The protein localises to the adherens junction. It localises to the cell membrane. Its subcellular location is the cell cortex. It is found in the cytoskeleton. Adapter protein involved in asymmetrical cell division and cell polarization processes. Seems to play a central role in the formation of epithelial tight junctions. Targets the phosphatase PTEN to cell junctions. Involved in Schwann cell peripheral myelination. Association with PARD6B may prevent the interaction of PARD3 with F11R/JAM1, thereby preventing tight junction assembly. The PARD6-PARD3 complex links GTP-bound Rho small GTPases to atypical protein kinase C proteins. Required for establishment of neuronal polarity and normal axon formation in cultured hippocampal neurons. In Homo sapiens (Human), this protein is Partitioning defective 3 homolog.